The chain runs to 385 residues: 8-amino-7-oxononanoate synthase (385 aa).

Arg-21 is a substrate binding site. Pyridoxal 5'-phosphate is bound at residue 108-109; that stretch reads GF. His-133 is a substrate binding site. Pyridoxal 5'-phosphate contacts are provided by Ser-179, His-207, and Thr-233. Position 236 is an N6-(pyridoxal phosphate)lysine (Lys-236). Substrate is bound at residue Thr-352.

The protein belongs to the class-II pyridoxal-phosphate-dependent aminotransferase family. BioF subfamily. In terms of assembly, homodimer. Pyridoxal 5'-phosphate is required as a cofactor.

The enzyme catalyses 6-carboxyhexanoyl-[ACP] + L-alanine + H(+) = (8S)-8-amino-7-oxononanoate + holo-[ACP] + CO2. It functions in the pathway cofactor biosynthesis; biotin biosynthesis. Catalyzes the decarboxylative condensation of pimeloyl-[acyl-carrier protein] and L-alanine to produce 8-amino-7-oxononanoate (AON), [acyl-carrier protein], and carbon dioxide. In Salmonella paratyphi B (strain ATCC BAA-1250 / SPB7), this protein is 8-amino-7-oxononanoate synthase.